The primary structure comprises 222 residues: GTP cyclohydrolase 1 (222 aa).

Zn(2+)-binding residues include cysteine 111, histidine 114, and cysteine 182.

Belongs to the GTP cyclohydrolase I family. In terms of assembly, toroid-shaped homodecamer, composed of two pentamers of five dimers.

The enzyme catalyses GTP + H2O = 7,8-dihydroneopterin 3'-triphosphate + formate + H(+). The protein operates within cofactor biosynthesis; 7,8-dihydroneopterin triphosphate biosynthesis; 7,8-dihydroneopterin triphosphate from GTP: step 1/1. In Citrobacter koseri (strain ATCC BAA-895 / CDC 4225-83 / SGSC4696), this protein is GTP cyclohydrolase 1.